Here is a 379-residue protein sequence, read N- to C-terminus: DNA (cytosine-5)-methyltransferase (379 aa).

Residues 4–366 (LRVLEFYSGI…KVLVSPNEEE (363 aa)) form the SAM-dependent MTase C5-type domain. The active site involves C78. The segment covering 178–192 (KKEQDKHNEKVDENK) has biased composition (basic and acidic residues). Residues 178–205 (KKEQDKHNEKVDENKLNNNSNNNNEQNK) are disordered. Low complexity predominate over residues 193-203 (LNNNSNNNNEQ).

This sequence belongs to the class I-like SAM-binding methyltransferase superfamily. C5-methyltransferase family.

It localises to the nucleus. The enzyme catalyses a 2'-deoxycytidine in DNA + S-adenosyl-L-methionine = a 5-methyl-2'-deoxycytidine in DNA + S-adenosyl-L-homocysteine + H(+). In terms of biological role, involved in epigenetic gene silencing. Methylates specific cytosine residues in the retrotransposons DIRS-1 and Skipper. The chain is DNA (cytosine-5)-methyltransferase (dnmA) from Dictyostelium discoideum (Social amoeba).